The primary structure comprises 182 residues: Photosystem I assembly protein Ycf4 (182 aa).

2 helical membrane passes run W22–L42 and V63–F83.

It belongs to the Ycf4 family.

The protein localises to the plastid. It is found in the chloroplast thylakoid membrane. In terms of biological role, seems to be required for the assembly of the photosystem I complex. The polypeptide is Photosystem I assembly protein Ycf4 (Oltmannsiellopsis viridis (Marine flagellate)).